The chain runs to 804 residues: Zinc finger protein YGR067C (804 aa).

C2H2-type zinc fingers lie at residues 8-30 (YICS…ERSH) and 36-59 (FQCQ…RTVH). Residues 782-796 (QEFSASSTDNKQSKN) are compositionally biased toward polar residues. Positions 782 to 804 (QEFSASSTDNKQSKNIEIFSQIK) are disordered.

It is found in the nucleus. The sequence is that of Zinc finger protein YGR067C from Saccharomyces cerevisiae (strain ATCC 204508 / S288c) (Baker's yeast).